We begin with the raw amino-acid sequence, 372 residues long: MSLRCGGAVRTVGPRVFGRYVFSPVREVSFLPDEKKEFLQSGPDLQEFISGNLADKSTWDEYKGNLKRQKGERLRLPPWLKTEIPMGKNYNKLKNTLRNLNLHTVCEEARCPNIGECWGGGEYATATATIMLMGDTCTRGCRFCSVKTARNPPPLDANEPYNTAKAIAEWGLDYVVLTSVDRDDMPDGGAEHFAKTVSYLKERNPKILVECLTPDFRGDLKAIEKVALSGLDVYAHNVETVPELQRKVRDPRANFDQSLRVLKHAKEVRPDVISKTSIMLGLGENDEQVYATMKALREADVDCLTLGQYMQPTKRHLKVEEYITPEKFKYWEKVGNELGFHYTASGPLVRSSYKAGEFFLKNLVAKRKTKAL.

The N-terminal 27 residues, 1-27, are a transit peptide targeting the mitochondrion; it reads MSLRCGGAVRTVGPRVFGRYVFSPVRE. The [4Fe-4S] cluster site is built by C106, C111, C117, C137, C141, C144, and S352. The region spanning 122 to 341 is the Radical SAM core domain; the sequence is EYATATATIM…EKVGNELGFH (220 aa).

The protein belongs to the radical SAM superfamily. Lipoyl synthase family. [4Fe-4S] cluster serves as cofactor.

The protein resides in the mitochondrion. It carries out the reaction [[Fe-S] cluster scaffold protein carrying a second [4Fe-4S](2+) cluster] + N(6)-octanoyl-L-lysyl-[protein] + 2 oxidized [2Fe-2S]-[ferredoxin] + 2 S-adenosyl-L-methionine + 4 H(+) = [[Fe-S] cluster scaffold protein] + N(6)-[(R)-dihydrolipoyl]-L-lysyl-[protein] + 4 Fe(3+) + 2 hydrogen sulfide + 2 5'-deoxyadenosine + 2 L-methionine + 2 reduced [2Fe-2S]-[ferredoxin]. Its pathway is protein modification; protein lipoylation via endogenous pathway; protein N(6)-(lipoyl)lysine from octanoyl-[acyl-carrier-protein]: step 2/2. In terms of biological role, catalyzes the radical-mediated insertion of two sulfur atoms into the C-6 and C-8 positions of the octanoyl moiety bound to the lipoyl domains of lipoate-dependent enzymes, thereby converting the octanoylated domains into lipoylated derivatives. The chain is Lipoyl synthase, mitochondrial from Bos taurus (Bovine).